The following is a 160-amino-acid chain: 6,7-dimethyl-8-ribityllumazine synthase (160 aa).

5-amino-6-(D-ribitylamino)uracil contacts are provided by residues Trp27, 59–61, and 81–83; these read AIE and VVI. 86–87 serves as a coordination point for (2S)-2-hydroxy-3-oxobutyl phosphate; that stretch reads QT. Catalysis depends on His89, which acts as the Proton donor. Asn114 provides a ligand contact to 5-amino-6-(D-ribitylamino)uracil. (2S)-2-hydroxy-3-oxobutyl phosphate is bound at residue Arg128.

This sequence belongs to the DMRL synthase family. Homopentamer.

It carries out the reaction (2S)-2-hydroxy-3-oxobutyl phosphate + 5-amino-6-(D-ribitylamino)uracil = 6,7-dimethyl-8-(1-D-ribityl)lumazine + phosphate + 2 H2O + H(+). It participates in cofactor biosynthesis; riboflavin biosynthesis; riboflavin from 2-hydroxy-3-oxobutyl phosphate and 5-amino-6-(D-ribitylamino)uracil: step 1/2. Functionally, catalyzes the formation of 6,7-dimethyl-8-ribityllumazine by condensation of 5-amino-6-(D-ribitylamino)uracil with 3,4-dihydroxy-2-butanone 4-phosphate. This is the penultimate step in the biosynthesis of riboflavin. This chain is 6,7-dimethyl-8-ribityllumazine synthase, found in Mycobacterium sp. (strain JLS).